The primary structure comprises 727 residues: Engulfment and cell motility protein 1 (727 aa).

Tyr18 is modified (phosphotyrosine; by HCK). Residues Lys100 and Lys105 each carry the N6-acetyllysine modification. Position 216 is a phosphotyrosine; by HCK (Tyr216). An ELMO domain is found at Ala319–Leu492. Ser344 bears the Phosphoserine mark. A phosphotyrosine; by HCK mark is found at Tyr395 and Tyr511. The region spanning Arg555–Asp676 is the PH domain. The SH3-binding motif lies at Pro707–Pro714. Position 720 is a phosphotyrosine; by HCK (Tyr720).

As to quaternary structure, interacts directly with the SH3-domain of DOCK1 via its SH3-binding site. Probably forms a heterotrimeric complex with DOCK1 and RAC1. Interacts with PLEKHG6. Interacts with HCK (via SH3 domain). Interacts with ADGRB1. Interacts with ADGRB3. Interacts with DOCK5. Phosphorylated by HCK.

It is found in the cytoplasm. Its subcellular location is the cell membrane. Its function is as follows. Involved in cytoskeletal rearrangements required for phagocytosis of apoptotic cells and cell motility. Acts in association with DOCK1 and CRK. Was initially proposed to be required in complex with DOCK1 to activate Rac Rho small GTPases. May enhance the guanine nucleotide exchange factor (GEF) activity of DOCK1. The sequence is that of Engulfment and cell motility protein 1 (Elmo1) from Mus musculus (Mouse).